The primary structure comprises 262 residues: Tryptophan synthase alpha chain (262 aa).

Residues Glu-48 and Asp-59 each act as proton acceptor in the active site.

This sequence belongs to the TrpA family. In terms of assembly, tetramer of two alpha and two beta chains.

The enzyme catalyses (1S,2R)-1-C-(indol-3-yl)glycerol 3-phosphate + L-serine = D-glyceraldehyde 3-phosphate + L-tryptophan + H2O. Its pathway is amino-acid biosynthesis; L-tryptophan biosynthesis; L-tryptophan from chorismate: step 5/5. Functionally, the alpha subunit is responsible for the aldol cleavage of indoleglycerol phosphate to indole and glyceraldehyde 3-phosphate. The sequence is that of Tryptophan synthase alpha chain from Helicobacter pylori (strain P12).